The following is a 497-amino-acid chain: Indoleacetaldoxime dehydratase (497 aa).

The chain crosses the membrane as a helical span at residues 2–20 (EMILSISLCLTTLITLLLL). Cys439 is a heme binding site.

The protein belongs to the cytochrome P450 family.

It localises to the membrane. It catalyses the reaction (E)-(indol-3-yl)acetaldehyde oxime = (indol-3-yl)acetonitrile + H2O. Its function is as follows. Involved in the biosynthesis of the indole-derived phytoalexin camalexin. Catalyzes the conversion of indole-3-acetaldoxime to indole-3-acetonitrile. Required for resistance to A.brassicicola and B.cinerea. This Arabidopsis thaliana (Mouse-ear cress) protein is Indoleacetaldoxime dehydratase (CYP71A13).